Reading from the N-terminus, the 470-residue chain is Diaminobutyrate--2-oxoglutarate aminotransferase (470 aa).

Lysine 304 carries the N6-(pyridoxal phosphate)lysine modification.

Belongs to the class-III pyridoxal-phosphate-dependent aminotransferase family. Pyridoxal 5'-phosphate is required as a cofactor.

It catalyses the reaction L-2,4-diaminobutanoate + 2-oxoglutarate = L-aspartate 4-semialdehyde + L-glutamate. Its pathway is siderophore biosynthesis; rhizobactin biosynthesis. The polypeptide is Diaminobutyrate--2-oxoglutarate aminotransferase (rhbA) (Rhizobium meliloti (strain 1021) (Ensifer meliloti)).